Here is a 355-residue protein sequence, read N- to C-terminus: C-C chemokine receptor type 3 (355 aa).

The Extracellular portion of the chain corresponds to 1 to 34 (MTTSLDTVETFGPTSYDDDMGLLCEKADVGALIA). A helical transmembrane segment spans residues 35 to 62 (QFVPPLYSLVFMVGLLGNVVVVMILIKY). Residues 63-72 (RRLRIMTNIY) lie on the Cytoplasmic side of the membrane. A helical membrane pass occupies residues 73–93 (LLNLAISDLLFLFTLPFWIHY). Over 94–107 (VRERNWVFSHGMCK) the chain is Extracellular. A disulfide bridge connects residues Cys106 and Cys183. The chain crosses the membrane as a helical span at residues 108–129 (VLSGFYHTGLYSEIFFIILLTI). The Cytoplasmic segment spans residues 130–146 (DRYLAIVHAVFALRART). The chain crosses the membrane as a helical span at residues 147-171 (VTFGVVTSIVTWGLAVLAALPEFIF). The Extracellular portion of the chain corresponds to 172 to 203 (YGTEELFPETLCSAIYPQDTVYSWRHFHTLRM). A helical transmembrane segment spans residues 204 to 223 (TILCLALPLLVMAICYTGII). Over 224 to 239 (KTLLRCPSKKKYKAIR) the chain is Cytoplasmic. A helical membrane pass occupies residues 240–264 (LIFVIMAVFFIFWTPYNVAILISTY). Residues 265-281 (QSILFGPDCERSKHLDL) lie on the Extracellular side of the membrane. A helical membrane pass occupies residues 282-305 (FVLVTEVIAYSHCWVNPVIYAFVG). At 306–355 (ERFRKYLRHFFHRHVLMHPGKYIPFLPSEKLERTSSVSPSTAEPELSIVF) the chain is on the cytoplasmic side.

The protein belongs to the G-protein coupled receptor 1 family.

Its subcellular location is the cell membrane. In terms of biological role, receptor for C-C type chemokine. Binds and responds to a variety of chemokines, including CCL11, CCL26, CCL7, CCL13, RANTES(CCL5) and CCL15. Subsequently transduces a signal by increasing the intracellular calcium ions level. In addition acts as a possible functional receptor for NARS1. In Macaca fascicularis (Crab-eating macaque), this protein is C-C chemokine receptor type 3 (CCR3).